We begin with the raw amino-acid sequence, 452 residues long: Sensor histidine kinase HprS (452 aa).

Over 1 to 9 (MKRLSITVR) the chain is Cytoplasmic. A helical membrane pass occupies residues 10 to 30 (LTLLFILLLSVAGAGIVWTLY). Topologically, residues 31-158 (NGLASELKWR…ARHNMLEQYK (128 aa)) are periplasmic. Residues 159–179 (INSIIICIVAIVLCSVLSPLL) form a helical membrane-spanning segment. The Cytoplasmic segment spans residues 180–452 (IRTGLREIKK…VFRITLPQRN (273 aa)). One can recognise an HAMP domain in the interval 181–234 (RTGLREIKKLSGVTEALNYNDSREPVEVSALPRELKPLGQALNKMHHALVKDFE). One can recognise a Histidine kinase domain in the interval 242-452 (DLAHELRTPI…VFRITLPQRN (211 aa)). Phosphohistidine; by autocatalysis is present on His-245.

Autophosphorylated.

It localises to the cell inner membrane. The catalysed reaction is ATP + protein L-histidine = ADP + protein N-phospho-L-histidine.. Member of a two-component regulatory system HprR/HprS involved in response to hydrogen peroxide. Senses H(2)O(2), maybe via the redox state of the membrane. Activates HprR by phosphorylation. Can also phosphorylate CusR. The protein is Sensor histidine kinase HprS of Escherichia coli (strain K12).